The following is a 192-amino-acid chain: CASP-like protein 2U1 (192 aa).

The Cytoplasmic portion of the chain corresponds to 1-11 (MASRKQGAREG). The chain crosses the membrane as a helical span at residues 12–32 (LWSMGVRLLTTLLCITSLILL). Over 33–58 (LKAKQTVRRALGLGYIAQTVKYSDTS) the chain is Extracellular. The helical transmembrane segment at 59–79 (GFIYLVYINILVAAYGLIVFV) threads the bilayer. The Cytoplasmic portion of the chain corresponds to 80–96 (SLIPSALGKSCSGKCSR). Residues 97–117 (WTIFVLDQVFAYVLLSAVSAA) traverse the membrane as a helical segment. Over 118–145 (TEVLYLADKGMSKTQWEALCPTYGFFCH) the chain is Extracellular. A helical membrane pass occupies residues 146-166 (MVSASVAIGSVAVVLLAVLSV). Over 167–192 (SSAQSLFHNFYTRALYTTKMRHSSLT) the chain is Cytoplasmic.

Belongs to the Casparian strip membrane proteins (CASP) family. In terms of assembly, homodimer and heterodimers.

The protein localises to the cell membrane. The chain is CASP-like protein 2U1 from Adiantum capillus-veneris (Maidenhair fern).